The primary structure comprises 363 residues: Spermatogenesis-associated protein 22 (363 aa).

2 stretches are compositionally biased toward polar residues: residues 1 to 12 and 145 to 157; these read MKRSLNENSARS and SCPM…QQKQ. Disordered regions lie at residues 1–51 and 145–169; these read MKRS…DNYD and SCPM…LPRN.

As to quaternary structure, component of a multiprotein complex with MEIOB and RPA2. Interacts with MEIOB. Interacts with the complex BRME1:HSF2BP:BRCA2. As to expression, expressed in testis.

It localises to the chromosome. Functionally, meiosis-specific protein required for homologous recombination in meiosis I. The protein is Spermatogenesis-associated protein 22 (SPATA22) of Macaca fascicularis (Crab-eating macaque).